Reading from the N-terminus, the 64-residue chain is Large ribosomal subunit protein bL35 (64 aa).

Residues 1 to 44 (MPKLKTNRGAAKRFKVKASGRISRARSNHSHILTKKDPKRKRRL) are disordered. Over residues 10 to 44 (AAKRFKVKASGRISRARSNHSHILTKKDPKRKRRL) the composition is skewed to basic residues.

Belongs to the bacterial ribosomal protein bL35 family.

This chain is Large ribosomal subunit protein bL35, found in Halorhodospira halophila (strain DSM 244 / SL1) (Ectothiorhodospira halophila (strain DSM 244 / SL1)).